A 276-amino-acid polypeptide reads, in one-letter code: UPF0328 protein ECU08_2080 (276 aa).

The segment at 1–24 (MGIIDVQRSHLTATPSKERDAPAH) is disordered.

Belongs to the UPF0328 family.

The chain is UPF0328 protein ECU08_2080 from Encephalitozoon cuniculi (strain GB-M1) (Microsporidian parasite).